We begin with the raw amino-acid sequence, 321 residues long: Nod factor export ATP-binding protein I (321 aa).

In terms of domain architecture, ABC transporter spans 17-247 (LSVEGLRKRY…EIGCDVVEVY (231 aa)). 49 to 56 (GPNGAGKT) is a binding site for ATP.

It belongs to the ABC transporter superfamily. Lipooligosaccharide exporter (TC 3.A.1.102) family. As to quaternary structure, the complex is composed of two ATP-binding proteins (NodI) and two transmembrane proteins (NodJ).

Its subcellular location is the cell inner membrane. In terms of biological role, part of the ABC transporter complex NodIJ involved in the export of the nodulation factors (Nod factors), the bacterial signal molecules that induce symbiosis and subsequent nodulation induction. Nod factors are LCO (lipo-chitin oligosaccharide), a modified beta-1,4-linked N-acetylglucosamine oligosaccharide. This subunit is responsible for energy coupling to the transport system. In Ralstonia nicotianae (strain ATCC BAA-1114 / GMI1000) (Ralstonia solanacearum), this protein is Nod factor export ATP-binding protein I.